A 491-amino-acid polypeptide reads, in one-letter code: Chromosomal replication initiator protein DnaA (491 aa).

The tract at residues 1-69 is domain I, interacts with DnaA modulators; sequence MTTWDKCLKK…TIQECHGNDL (69 aa). A domain II region spans residues 69–154; the sequence is LIIEYSNKKF…KEDEEYSFGL (86 aa). The domain III, AAA+ region stretch occupies residues 155–371; the sequence is PLKEKYVFDS…GALNRVLTTS (217 aa). Positions 199, 201, 202, and 203 each coordinate ATP. The domain IV, binds dsDNA stretch occupies residues 372–491; it reads KFNHKDPTIE…YELLLNKISR (120 aa).

This sequence belongs to the DnaA family. In terms of assembly, oligomerizes as a right-handed, spiral filament on DNA at oriC.

It localises to the cytoplasm. Plays an essential role in the initiation and regulation of chromosomal replication. ATP-DnaA binds to the origin of replication (oriC) to initiate formation of the DNA replication initiation complex once per cell cycle. Binds the DnaA box (a 9 base pair repeat at the origin) and separates the double-stranded (ds)DNA. Forms a right-handed helical filament on oriC DNA; dsDNA binds to the exterior of the filament while single-stranded (ss)DNA is stabiized in the filament's interior. The ATP-DnaA-oriC complex binds and stabilizes one strand of the AT-rich DNA unwinding element (DUE), permitting loading of DNA polymerase. After initiation quickly degrades to an ADP-DnaA complex that is not apt for DNA replication. Binds acidic phospholipids. This Francisella tularensis subsp. tularensis (strain WY96-3418) protein is Chromosomal replication initiator protein DnaA.